A 142-amino-acid chain; its full sequence is Interleukin-3 (142 aa).

A signal peptide spans 1–18; it reads MSHLPILLLLLLVSPGLQ. N-linked (GlcNAc...) asparagine glycosylation occurs at N33. Residues C34 and C102 are joined by a disulfide bond.

The protein belongs to the IL-3 family. Monomer. Activated T-cells, mast cells, natural killer cells.

The protein localises to the secreted. Granulocyte/macrophage colony-stimulating factors are cytokines that act in hematopoiesis by controlling the production, differentiation, and function of 2 related white cell populations of the blood, the granulocytes and the monocytes-macrophages. In terms of biological role, this CSF induces granulocytes, macrophages, mast cells, stem cells, erythroid cells, eosinophils and megakaryocytes. The sequence is that of Interleukin-3 (IL3) from Callithrix jacchus (White-tufted-ear marmoset).